The sequence spans 471 residues: Heat shock 70 kDa protein 13 (471 aa).

Residues 1-22 (MAGEMTILGSAVLTLLLAGYLA) form the signal peptide. A glycan (N-linked (GlcNAc...) asparagine) is linked at Asn184. Residues 316–339 (NDSQKPQNADSKLPEDQLTPGDGH) are disordered.

It belongs to the heat shock protein 70 family. Binds UBQLN2.

It localises to the microsome. The protein resides in the endoplasmic reticulum. In terms of biological role, has peptide-independent ATPase activity. The polypeptide is Heat shock 70 kDa protein 13 (Hspa13) (Rattus norvegicus (Rat)).